Consider the following 361-residue polypeptide: MNHETNYHALLIADTPLIDVRAPIEFQQGAMPGAINLPLMMDDERAAVGTCYKRQGADAALSLGHRLVCGDIRQQRLEAWKAAYQRFPNGYLCCARGGQRSHIVQRWLQETGIDCPLIEGGYKALRQTAIQATWQLVQKPILLIGGCTGSGKTQLVRQQPNGVDLEGLARHRGSSFGRTLKPQLSQASFENKLAVELLKINARQTLKRWVLEDEGRTIGANHLPECLRERMAQAPITVVEDPFALRLERLREEYFIRMHHDFIHAYGDEGGWQAYSEYLHHGLFAIRRRLGLQRFAELTNTLDMALADQLSNGSTDGHMAWLVPLLNEYYDPMYRYQLEKKAANIVFRGTWQEVANWLKAQ.

Residues leucine 11–tryptophan 134 enclose the Rhodanese domain. Residue cysteine 94 is the S-selanylcysteine intermediate of the active site.

This sequence belongs to the SelU family. In terms of assembly, monomer.

It carries out the reaction 5-methylaminomethyl-2-thiouridine(34) in tRNA + selenophosphate + (2E)-geranyl diphosphate + H2O + H(+) = 5-methylaminomethyl-2-selenouridine(34) in tRNA + (2E)-thiogeraniol + phosphate + diphosphate. It catalyses the reaction 5-methylaminomethyl-2-thiouridine(34) in tRNA + (2E)-geranyl diphosphate = 5-methylaminomethyl-S-(2E)-geranyl-thiouridine(34) in tRNA + diphosphate. The catalysed reaction is 5-methylaminomethyl-S-(2E)-geranyl-thiouridine(34) in tRNA + selenophosphate + H(+) = 5-methylaminomethyl-2-(Se-phospho)selenouridine(34) in tRNA + (2E)-thiogeraniol. The enzyme catalyses 5-methylaminomethyl-2-(Se-phospho)selenouridine(34) in tRNA + H2O = 5-methylaminomethyl-2-selenouridine(34) in tRNA + phosphate. Its function is as follows. Involved in the post-transcriptional modification of the uridine at the wobble position (U34) of tRNA(Lys), tRNA(Glu) and tRNA(Gln). Catalyzes the conversion of 2-thiouridine (S2U-RNA) to 2-selenouridine (Se2U-RNA). Acts in a two-step process involving geranylation of 2-thiouridine (S2U) to S-geranyl-2-thiouridine (geS2U) and subsequent selenation of the latter derivative to 2-selenouridine (Se2U) in the tRNA chain. The polypeptide is tRNA 2-selenouridine synthase (Salmonella arizonae (strain ATCC BAA-731 / CDC346-86 / RSK2980)).